The primary structure comprises 81 residues: Trefoil factor 3 (81 aa).

An N-terminal signal peptide occupies residues 1–22 (METRAFWTTLLLVLVAGSSCKA). One can recognise a P-type domain in the interval 31–74 (SQCMVPANVRVDCGYPTVTSEQCNNRGCCFDSSIPNVPWCFKPL). 3 disulfide bridges follow: C33/C59, C43/C58, and C53/C70.

In terms of assembly, monomer. Homodimer; disulfide-linked. In terms of tissue distribution, expressed in goblet cells of the intestines, and colon, in paraventricular hypothalamus and supraoptic nuclei. Weakly expressed in gastric epithelial cells (at protein level). Expressed by goblet cells of small and large intestinal epithelia, kidney and stomach. Expressed in the paraventricular hypothalamus, arcuate nucleus and amygdala of the brain. Weakly expressed in gastric epithelial cells.

It localises to the secreted. The protein resides in the extracellular space. It is found in the extracellular matrix. The protein localises to the cytoplasm. Its function is as follows. Involved in the maintenance and repair of the intestinal mucosa. Promotes the mobility of epithelial cells in healing processes (motogen). The sequence is that of Trefoil factor 3 (Tff3) from Rattus norvegicus (Rat).